We begin with the raw amino-acid sequence, 207 residues long: Outer-membrane lipoprotein carrier protein (207 aa).

An N-terminal signal peptide occupies residues M1–A21.

The protein belongs to the LolA family. Monomer.

The protein resides in the periplasm. Its function is as follows. Participates in the translocation of lipoproteins from the inner membrane to the outer membrane. Only forms a complex with a lipoprotein if the residue after the N-terminal Cys is not an aspartate (The Asp acts as a targeting signal to indicate that the lipoprotein should stay in the inner membrane). This chain is Outer-membrane lipoprotein carrier protein, found in Azotobacter vinelandii (strain DJ / ATCC BAA-1303).